Reading from the N-terminus, the 581-residue chain is Pre-mRNA 3'-end-processing factor FIP1 (581 aa).

2 stretches are compositionally biased toward basic and acidic residues: residues 1–10 and 32–42; these read MSAGEVERLV and VHVHSDLAKDL. 3 disordered regions span residues 1 to 95, 211 to 282, and 320 to 581; these read MSAG…EDDV, TVQQ…ESPD, and RSAT…APAE. Positions 1–110 are sufficient for interaction with PAPOLA; sequence MSAGEVERLV…DIKTGAPQYG (110 aa). The interval 1 to 332 is necessary for stimulating PAPOLA activity; the sequence is MSAGEVERLV…TEVDNNFSKP (332 aa). 2 stretches are compositionally biased toward acidic residues: residues 43 to 54 and 80 to 94; these read DENEVERPEEEN and TEDD…DEDD. Phosphoserine occurs at positions 84, 86, and 88. The tract at residues 136-219 is sufficient for interaction with CPSF4; that stretch reads KGVDLDAPGS…ITVQQGRTGN (84 aa). Residues 247–267 show a composition bias toward low complexity; it reads SRNSTSSQSQTSTASRKASSS. Positions 271–282 are enriched in basic and acidic residues; the sequence is WQDRYGRAESPD. The residue at position 280 (serine 280) is a Phosphoserine. Residues 320–330 are compositionally biased toward polar residues; it reads RSATEVDNNFS. Pro residues predominate over residues 331–389; that stretch reads KPPPFFPPGAPPTHLPPPPFLPPPPTVSTAPPLIPPPGIPITVPPPGFPPPPGAPPPSL. At tyrosine 411 the chain carries Phosphotyrosine. Residues 419–435 show a composition bias toward polar residues; the sequence is LTSSAPSWPSLVDTTKQ. Residues 428 to 581 are sufficient for interaction with CPSF1 and CSTF3; sequence SLVDTTKQWD…QESTEAAPAE (154 aa). A compositionally biased stretch (basic and acidic residues) spans 439 to 479; the sequence is YARREKDRDRDRERDRDRERERDRDRERERTRERERERDHS. Residues 442–477 are arg/Asp/Glu-rich domain; that stretch reads REKDRDRDRERDRDRERERDRDRERERTRERERERD. The interval 478-535 is sufficient for interaction with AHCYL1; the sequence is HSPTPSVFNSDEERYRYREYAERGYERHRASREKEERHRERRHREKEETRHKSSRSNS. Residue serine 479 is modified to Phosphoserine. Threonine 481 carries the post-translational modification Phosphothreonine. 2 positions are modified to phosphoserine: serine 483 and serine 487. Over residues 488–515 the composition is skewed to basic and acidic residues; the sequence is DEERYRYREYAERGYERHRASREKEERH. Residues 529–538 are compositionally biased toward basic residues; the sequence is KSSRSNSRRR. Serine 541 carries the phosphoserine modification. The span at 547–557 shows a compositional bias: basic residues; sequence HRRHKHKKSKR.

This sequence belongs to the FIP1 family. As to quaternary structure, component of the cleavage and polyadenylation specificity factor (CPSF) complex, composed of CPSF1, CPSF2, CPSF3, CPSF4 and FIP1L1. Found in a complex with CPSF1, FIP1L1 and PAPOLA. Interacts with CPSF1, CPSF4, CSTF2 and CSTF3. Interacts with AHCYL1 (when phosphorylated); the interaction is direct and associates AHCYL1 with the CPSF complex and RNA. Interacts with PAPOLA; the interaction seems to be increased by the interaction with AHCYL1. Interacts with NUDT21/CPSF5; this interaction occurs in a RNA sequence-specific manner. Interacts (preferentially via unphosphorylated form and Arg/Glu/Asp-rich domain) with CPSF6 (via Arg/Ser-rich domain); this interaction mediates, at least in part, the interaction between the CFIm and CPSF complexes and may be inhibited by CPSF6 hyper-phosphorylation. Interacts (preferentially via unphosphorylated form and Arg/Asp/Glu-rich domain) with CPSF7 (via Arg/Ser-rich domain); this interaction mediates, at least in part, the interaction between the CFIm and CPSF complexes and may be inhibited by CPSF7 hyper-phosphorylation.

It localises to the nucleus. Component of the cleavage and polyadenylation specificity factor (CPSF) complex that plays a key role in pre-mRNA 3'-end formation, recognizing the AAUAAA signal sequence and interacting with poly(A) polymerase and other factors to bring about cleavage and poly(A) addition. FIP1L1 contributes to poly(A) site recognition and stimulates poly(A) addition. Binds to U-rich RNA sequence elements surrounding the poly(A) site. May act to tether poly(A) polymerase to the CPSF complex. This Mus musculus (Mouse) protein is Pre-mRNA 3'-end-processing factor FIP1 (Fip1l1).